A 634-amino-acid chain; its full sequence is MWLQQRLKGLPGLLSSSWARRLLCLLGLLLLLLWFGGSGARRAAGGLHLLPWSRGEPGAAEPSACLEAATRAWRGLRERGEVVPLGPGVPALVANGFLALDVAANRLWVTPGEREPAVAPDFVPFVQLRPLSALAEAGEAVLLLREGLLRRVRCLQLGSPGPGPVAAGPGPASVSGLAAGSGRDCVLLQEDFLAHRGRPHVYLQRIQLNNPTERVAALQTVGPTAGPAPKAFTSTLEKVGDHQFLLYSGRSPPTPTGLVHLVVVAAKKLVNRLQVAPKTQLDETVLWVVHVSGPINPQVLKSKAAKELKALQDLARKEMLELLDMPAAELLQDHQLLWAQLFSPGVEMKKITDTHTPSGLTVNLTLYYMLSCSPAPLLSPSLSHRERDQMESTLNYEDHCFSGHATMHAENLWPGRLSSVQQILQLSDLWRLTLQKRGCKGLVKVGAPGILQGMVLSFGGLQFTENHLQFQADPDVLHNSYALHGIRYKNDHINLAVLADAEGKPYLHVSVESRGQPVKIYACKAGCLDEPVELTSAPTGHTFSVMVTQPITPLLYISTDLTHLQDLRHTLHLKAILAHDEHMAQQDPGLPFLFWFSVASLITLFHLFLFKLIYNEYCGPGAKPLFRSKEDPSV.

Residues 1–40 form the signal peptide; the sequence is MWLQQRLKGLPGLLSSSWARRLLCLLGLLLLLLWFGGSGA. Residues 41-589 lie on the Extracellular side of the membrane; that stretch reads RRAAGGLHLL…DEHMAQQDPG (549 aa). The N-linked (GlcNAc...) asparagine glycan is linked to N363. Residues 590-610 form a helical membrane-spanning segment; sequence LPFLFWFSVASLITLFHLFLF. The Cytoplasmic portion of the chain corresponds to 611 to 634; that stretch reads KLIYNEYCGPGAKPLFRSKEDPSV.

It localises to the membrane. This is an uncharacterized protein from Homo sapiens (Human).